Reading from the N-terminus, the 276-residue chain is Putative respiratory nitrate reductase heme subunit ORF7 (276 aa).

Heme b is bound by residues M138 and K228.

In terms of assembly, probable multiprotein complex; a catalytic heterodimer of an alpha and beta chain is proposed to associate with additional subunits involved in membrane attachment and electron transfer. Heme b is required as a cofactor.

It localises to the cell membrane. The respiratory membrane-bound nitrate reductase enzyme complex plays a role in generation of metabolic energy by using nitrate as a terminal electron acceptor during anaerobic conditions. May transfer electrons to the iron-sulfur centers of the catalytic beta subunit. This is Putative respiratory nitrate reductase heme subunit ORF7 from Haloferax mediterranei (strain ATCC 33500 / DSM 1411 / JCM 8866 / NBRC 14739 / NCIMB 2177 / R-4) (Halobacterium mediterranei).